We begin with the raw amino-acid sequence, 59 residues long: MDKRLLDILVCPLCKSQLHLDANKQELICKADRLAYPIRDDVPVTLVDEARSLSADEIA.

It belongs to the UPF0434 family.

The chain is UPF0434 protein Pnec_0311 from Polynucleobacter necessarius subsp. necessarius (strain STIR1).